The chain runs to 144 residues: L-fucose mutarotase (144 aa).

H22 functions as the Proton donor in the catalytic mechanism. Residues D30, R109, and 131–133 contribute to the substrate site; that span reads YGN.

Belongs to the RbsD / FucU family. FucU mutarotase subfamily. Homodecamer.

The protein localises to the cytoplasm. The enzyme catalyses alpha-L-fucose = beta-L-fucose. It participates in carbohydrate metabolism; L-fucose metabolism. Functionally, involved in the anomeric conversion of L-fucose. This chain is L-fucose mutarotase, found in Histophilus somni (strain 129Pt) (Haemophilus somnus).